We begin with the raw amino-acid sequence, 232 residues long: MEESLLSIIVALDAKSQYDALKIVEQLDPTLCRVKVGKELFTHEGPSVVKKLQEENFEVFLDLKFHDIPNTTAQAVCAAADLGVWMVNVHASGGRKMMETCVERLKAGNYQTQLIAVTVLTSMGREDLKDIGLDIEPVEQVKRLAKLTKESGLDGVVCSAQEAKILRELIGQDFSLVTPGIRPEGSNADDQKRIVTPKQAMLDGSTHLVIGRPITKAENPTEMLKSILASIA.

Substrate is bound by residues Asp13, Lys35, 62-71 (DLKFHDIPNT), Thr121, Arg182, Gln191, Gly211, and Arg212. Residue Lys64 is the Proton donor of the active site.

Belongs to the OMP decarboxylase family. Type 1 subfamily. Homodimer.

It catalyses the reaction orotidine 5'-phosphate + H(+) = UMP + CO2. It participates in pyrimidine metabolism; UMP biosynthesis via de novo pathway; UMP from orotate: step 2/2. In terms of biological role, catalyzes the decarboxylation of orotidine 5'-monophosphate (OMP) to uridine 5'-monophosphate (UMP). This Acinetobacter baumannii (strain ACICU) protein is Orotidine 5'-phosphate decarboxylase.